Reading from the N-terminus, the 330-residue chain is Lipoyl synthase (330 aa).

[4Fe-4S] cluster-binding residues include Cys55, Cys60, Cys66, Cys81, Cys85, Cys88, and Ser292. Positions 67-281 (WEDREATFLI…AEEAREIGFV (215 aa)) constitute a Radical SAM core domain.

Belongs to the radical SAM superfamily. Lipoyl synthase family. It depends on [4Fe-4S] cluster as a cofactor.

The protein resides in the cytoplasm. The enzyme catalyses [[Fe-S] cluster scaffold protein carrying a second [4Fe-4S](2+) cluster] + N(6)-octanoyl-L-lysyl-[protein] + 2 oxidized [2Fe-2S]-[ferredoxin] + 2 S-adenosyl-L-methionine + 4 H(+) = [[Fe-S] cluster scaffold protein] + N(6)-[(R)-dihydrolipoyl]-L-lysyl-[protein] + 4 Fe(3+) + 2 hydrogen sulfide + 2 5'-deoxyadenosine + 2 L-methionine + 2 reduced [2Fe-2S]-[ferredoxin]. Its pathway is protein modification; protein lipoylation via endogenous pathway; protein N(6)-(lipoyl)lysine from octanoyl-[acyl-carrier-protein]: step 2/2. Its function is as follows. Catalyzes the radical-mediated insertion of two sulfur atoms into the C-6 and C-8 positions of the octanoyl moiety bound to the lipoyl domains of lipoate-dependent enzymes, thereby converting the octanoylated domains into lipoylated derivatives. This is Lipoyl synthase from Cutibacterium acnes (strain DSM 16379 / KPA171202) (Propionibacterium acnes).